The primary structure comprises 433 residues: E3 ubiquitin-protein ligase RNF26 (433 aa).

5 helical membrane-spanning segments follow: residues 24–44 (LNFLLVSSLLASLAWLLAFVY), 60–80 (GVLLSLLALIEAVVRFTCGGL), 147–169 (VINSLVNICLIGTQNLFSLVLAL), 183–203 (VVAAFLAHISSSAVAMAILLW), and 220–240 (LASFVLVNLTGLVLLACVLAV). An RING-type zinc finger spans residues 380–422 (CVICQDQSKTVLLLPCRHLCLCQACTEILMRHPVYHRNCPLCR).

Interacts with INCA1. Interacts with TMEM43, ENDOD1, TMEM33 and TMED1 to form a complex capable of modulating innate immune signaling through the cGAS-STING pathway. Interacts with UBE2J1; this interaction is important for SQSTM1 ubiquitination. In terms of tissue distribution, ubiquitous. Up-regulated in several cancer cell lines.

The protein resides in the endoplasmic reticulum membrane. The enzyme catalyses S-ubiquitinyl-[E2 ubiquitin-conjugating enzyme]-L-cysteine + [acceptor protein]-L-lysine = [E2 ubiquitin-conjugating enzyme]-L-cysteine + N(6)-ubiquitinyl-[acceptor protein]-L-lysine.. Its pathway is protein modification; protein ubiquitination. Functionally, E3 ubiquitin-protein ligase that plays a key role in endosome organization by retaining vesicles in the perinuclear cloud. Acts as a platform for perinuclear positioning of the endosomal system by mediating ubiquitination of SQSTM1 through interaction with the ubiquitin conjugating enzyme UBE2J1. Ubiquitinated SQSTM1 attracts specific vesicle-associated adapters, forming a molecular bridge that restrains cognate vesicles in the perinuclear region and organizes the endosomal pathway for efficient cargo transport. Also acts as a regulator of type I interferon production in response to viral infection by mediating the formation of 'Lys-11'-linked polyubiquitin chains on TMEM173/STING, leading to stabilize TMEM173/STING. Also required to limit type I interferon response by promoting autophagic degradation of IRF3. This Homo sapiens (Human) protein is E3 ubiquitin-protein ligase RNF26.